The following is a 631-amino-acid chain: Leucine aminopeptidase 2-2 (631 aa).

Residues 140-142 and 265-270 each bind substrate; these read QCQ and PYGGME. H294 provides a ligand contact to Zn(2+). E295 (proton acceptor) is an active-site residue. Residues H298 and E317 each coordinate Zn(2+). Y395 functions as the Proton donor in the catalytic mechanism.

The protein belongs to the peptidase M1 family. Zn(2+) is required as a cofactor.

Its subcellular location is the cytoplasm. The protein localises to the nucleus. The catalysed reaction is an epoxide + H2O = an ethanediol. In terms of biological role, aminopeptidase that preferentially cleaves di- and tripeptides. Also has low epoxide hydrolase activity (in vitro). Can hydrolyze the epoxide leukotriene LTA(4) but it forms preferentially 5,6-dihydroxy-7,9,11,14-eicosatetraenoic acid rather than the cytokine leukotriene B(4) as the product compared to the homologous mammalian enzyme (in vitro). In Meyerozyma guilliermondii (strain ATCC 6260 / CBS 566 / DSM 6381 / JCM 1539 / NBRC 10279 / NRRL Y-324) (Yeast), this protein is Leucine aminopeptidase 2-2.